The sequence spans 557 residues: Dihydroxy-acid dehydratase (557 aa).

Residue Asp-78 coordinates Mg(2+). A [2Fe-2S] cluster-binding site is contributed by Cys-119. Mg(2+)-binding residues include Asp-120 and Lys-121. The residue at position 121 (Lys-121) is an N6-carboxylysine. Cys-194 provides a ligand contact to [2Fe-2S] cluster. Glu-446 serves as a coordination point for Mg(2+). The active-site Proton acceptor is the Ser-472.

It belongs to the IlvD/Edd family. Homodimer. [2Fe-2S] cluster serves as cofactor. Mg(2+) is required as a cofactor.

The enzyme catalyses (2R)-2,3-dihydroxy-3-methylbutanoate = 3-methyl-2-oxobutanoate + H2O. It carries out the reaction (2R,3R)-2,3-dihydroxy-3-methylpentanoate = (S)-3-methyl-2-oxopentanoate + H2O. It functions in the pathway amino-acid biosynthesis; L-isoleucine biosynthesis; L-isoleucine from 2-oxobutanoate: step 3/4. Its pathway is amino-acid biosynthesis; L-valine biosynthesis; L-valine from pyruvate: step 3/4. Its function is as follows. Functions in the biosynthesis of branched-chain amino acids. Catalyzes the dehydration of (2R,3R)-2,3-dihydroxy-3-methylpentanoate (2,3-dihydroxy-3-methylvalerate) into 2-oxo-3-methylpentanoate (2-oxo-3-methylvalerate) and of (2R)-2,3-dihydroxy-3-methylbutanoate (2,3-dihydroxyisovalerate) into 2-oxo-3-methylbutanoate (2-oxoisovalerate), the penultimate precursor to L-isoleucine and L-valine, respectively. In Desulfosudis oleivorans (strain DSM 6200 / JCM 39069 / Hxd3) (Desulfococcus oleovorans), this protein is Dihydroxy-acid dehydratase.